Reading from the N-terminus, the 177-residue chain is Adenine phosphoribosyltransferase (177 aa).

It belongs to the purine/pyrimidine phosphoribosyltransferase family. Homodimer.

The protein localises to the cytoplasm. It catalyses the reaction AMP + diphosphate = 5-phospho-alpha-D-ribose 1-diphosphate + adenine. It participates in purine metabolism; AMP biosynthesis via salvage pathway; AMP from adenine: step 1/1. Catalyzes a salvage reaction resulting in the formation of AMP, that is energically less costly than de novo synthesis. This Chlorobium phaeobacteroides (strain DSM 266 / SMG 266 / 2430) protein is Adenine phosphoribosyltransferase.